The chain runs to 413 residues: Prophage integrase IntA (413 aa).

The Core-binding (CB) domain maps to 105-186 (NTFLLVAERW…RINEVMIYAQ (82 aa)). A Tyr recombinase domain is found at 209–386 (KNMPSIRPDQ…DYLEQRRPMM (178 aa)). Residues R248, K275, H337, R340, and H363 contribute to the active site. Residue Y373 is the O-(3'-phospho-DNA)-tyrosine intermediate of the active site.

The protein belongs to the 'phage' integrase family.

Functionally, integrase is necessary for integration of the phage into the host genome by site-specific recombination. In conjunction with excisionase, integrase is also necessary for excision of the prophage from the host genome. Part of the cryptic P4-like prophage CP4-57, it excises the prophage when overexpressed, which also requires integration host factor (encoded by ihfA and ihfB). Overexpression of AlpA leads to excision of the CP4-57 prophage, which inactivates ssrA (the gene upstream of the prophage) that encodes tmRNA which is required to rescue stalled ribosomes in a process known as trans-translation. This is Prophage integrase IntA (intA) from Escherichia coli (strain K12).